A 506-amino-acid polypeptide reads, in one-letter code: Transforming growth factor beta-1-induced transcript 1 protein (506 aa).

Residues 3–15 carry the LD motif 1 motif; that stretch reads DLDALLADLQITT. The disordered stretch occupies residues 15–62; the sequence is TPPRCPVLLTDSPEKPQPTETRPPPPPYDPKTAMSNKTSDHETFPVDK. The segment covering 52 to 62 has biased composition (basic and acidic residues); sequence TSDHETFPVDK. Short sequence motifs (LD motif) lie at residues 87–99 and 139–150; these read ELDR…NATQ and ELDRLMASLSDF. 2 disordered regions span residues 154–201 and 221–244; these read NTVS…PTPK and SDEV…ATSV. The span at 168 to 177 shows a compositional bias: basic and acidic residues; that stretch reads GSEEVSRPGD. Residues 248 to 260 carry the LD motif 4 motif; the sequence is DLDSMLVKLQSGL. 4 consecutive LIM zinc-binding domains span residues 271 to 330, 331 to 388, 389 to 448, and 449 to 506; these read GLCE…LYAP, RCAL…RLFG, AVCA…RRGS, and LCAG…RLYG.

It belongs to the paxillin family. Interacts with tcf3 and tcf7l2.

The protein resides in the cell junction. It is found in the focal adhesion. The protein localises to the nucleus matrix. It localises to the cytoplasm. Its subcellular location is the cytoskeleton. Functions as a molecular adapter coordinating multiple protein-protein interactions at the focal adhesion complex and in the nucleus. May regulate both Wnt and steroid signaling pathways and play a role in the processes of cell growth, proliferation, migration, differentiation and senescence. May have a zinc-dependent DNA-binding activity. This chain is Transforming growth factor beta-1-induced transcript 1 protein (tgfb1i1), found in Xenopus laevis (African clawed frog).